Here is a 358-residue protein sequence, read N- to C-terminus: Aromatic amino acid aminotransferase (358 aa).

Lys-214 is subject to N6-(pyridoxal phosphate)lysine.

The protein belongs to the class-II pyridoxal-phosphate-dependent aminotransferase family. As to quaternary structure, homodimer. Requires pyridoxal 5'-phosphate as cofactor.

The catalysed reaction is an aromatic L-alpha-amino acid + 2-oxoglutarate = an aromatic oxo-acid + L-glutamate. Aminotransferase that catalyzes the conversion of aromatic amino acids and 2-oxoglutarate into corresponding aromatic oxo acids and L-glutamate. The sequence is that of Aromatic amino acid aminotransferase from Rhodococcus erythropolis (strain PR4 / NBRC 100887).